Reading from the N-terminus, the 479-residue chain is GTPase Der (479 aa).

EngA-type G domains lie at 3–167 (FKVA…GEAR) and 208–383 (MRIA…KVWN). GTP is bound by residues 9–16 (GRPNVGKS), 56–60 (DTAGF), 119–122 (NKAE), 214–221 (GRPNAGKS), 261–265 (DTAGM), and 326–329 (NKWD). One can recognise a KH-like domain in the interval 384–468 (SRVSTGKLNR…PIRIALRTSD (85 aa)).

It belongs to the TRAFAC class TrmE-Era-EngA-EngB-Septin-like GTPase superfamily. EngA (Der) GTPase family. Associates with the 50S ribosomal subunit.

Its function is as follows. GTPase that plays an essential role in the late steps of ribosome biogenesis. The chain is GTPase Der from Mesorhizobium japonicum (strain LMG 29417 / CECT 9101 / MAFF 303099) (Mesorhizobium loti (strain MAFF 303099)).